A 444-amino-acid chain; its full sequence is Chromosome partition protein MukF (444 aa).

Residues 212–240 are leucine-zipper; it reads LDETSGNLRELQDTLNAAGDKLQAQLLRI.

Belongs to the MukF family. As to quaternary structure, interacts, and probably forms a ternary complex, with MukE and MukB via its C-terminal region. The complex formation is stimulated by calcium or magnesium. It is required for an interaction between MukE and MukB.

The protein resides in the cytoplasm. The protein localises to the nucleoid. In terms of biological role, involved in chromosome condensation, segregation and cell cycle progression. May participate in facilitating chromosome segregation by condensation DNA from both sides of a centrally located replisome during cell division. Not required for mini-F plasmid partitioning. Probably acts via its interaction with MukB and MukE. Overexpression results in anucleate cells. It has a calcium binding activity. The polypeptide is Chromosome partition protein MukF (Haemophilus influenzae (strain ATCC 51907 / DSM 11121 / KW20 / Rd)).